The primary structure comprises 142 residues: Gonadotropin subunit beta-2 (142 aa).

Positions 1 to 24 are cleaved as a signal peptide; that stretch reads MLGLHVGTLMISLFLCILLEPVEG. Cystine bridges form between Cys-30–Cys-78, Cys-44–Cys-93, Cys-47–Cys-131, Cys-55–Cys-109, Cys-59–Cys-111, and Cys-114–Cys-121. Asn-34 carries an N-linked (GlcNAc...) asparagine glycan.

Belongs to the glycoprotein hormones subunit beta family. Heterodimer of an alpha and a beta chain.

Its subcellular location is the secreted. In terms of biological role, involved in gametogenesis and steroidogenesis. The protein is Gonadotropin subunit beta-2 (cgbb) of Coregonus autumnalis (Arctic cisco).